The following is a 206-amino-acid chain: Ras-related protein Ral-B (206 aa).

Residue 21 to 29 (GSGGVGKSA) participates in GTP binding. An Effector region motif is present at residues 43-51 (YEPTKADSY). GTP-binding positions include 68-72 (DTAGQ), 128-131 (NKSD), and 158-160 (SAK). The segment at 181–206 (MSENKDKNGRKSGKSKKSFKERCCLL) is disordered. A Cysteine methyl ester modification is found at Cys-203. A lipid anchor (S-geranylgeranyl cysteine) is attached at Cys-203. Residues 204 to 206 (CLL) constitute a propeptide, removed in mature form.

Belongs to the small GTPase superfamily. Ras family. As to quaternary structure, interacts with EXOC2/Sec5 and EXOC8/Exo84. Interacts (via effector domain) with RALBP1. Prenylation is essential for membrane localization. Post-translationally, the farnesylated form confers resistance to the proapoptotic and anti-anchorage-dependent growth effects of some geranylgeranyltransferase I inhibitors.

The protein resides in the cell membrane. The protein localises to the midbody. It catalyses the reaction GTP + H2O = GDP + phosphate + H(+). Its activity is regulated as follows. Alternates between an inactive form bound to GDP and an active form bound to GTP. Activated by a guanine nucleotide-exchange factor (GEF) and inactivated by a GTPase-activating protein (GAP). Functionally, multifunctional GTPase involved in a variety of cellular processes including gene expression, cell migration, cell proliferation, oncogenic transformation and membrane trafficking. Accomplishes its multiple functions by interacting with distinct downstream effectors. Acts as a GTP sensor for GTP-dependent exocytosis of dense core vesicles. Required both to stabilize the assembly of the exocyst complex and to localize functional exocyst complexes to the leading edge of migrating cells. Required for suppression of apoptosis. In late stages of cytokinesis, upon completion of the bridge formation between dividing cells, mediates exocyst recruitment to the midbody to drive abscission. Involved in ligand-dependent receptor mediated endocytosis of the EGF and insulin receptors. This Rattus norvegicus (Rat) protein is Ras-related protein Ral-B (Ralb).